Here is a 501-residue protein sequence, read N- to C-terminus: ATP synthase subunit alpha, chloroplastic (501 aa).

G170–T177 provides a ligand contact to ATP.

Belongs to the ATPase alpha/beta chains family. In terms of assembly, F-type ATPases have 2 components, CF(1) - the catalytic core - and CF(0) - the membrane proton channel. CF(1) has five subunits: alpha(3), beta(3), gamma(1), delta(1), epsilon(1). CF(0) has four main subunits: a, b, b' and c.

It localises to the plastid. It is found in the chloroplast thylakoid membrane. It catalyses the reaction ATP + H2O + 4 H(+)(in) = ADP + phosphate + 5 H(+)(out). Functionally, produces ATP from ADP in the presence of a proton gradient across the membrane. The alpha chain is a regulatory subunit. The chain is ATP synthase subunit alpha, chloroplastic from Pisum sativum (Garden pea).